The primary structure comprises 199 residues: 3-isopropylmalate dehydratase small subunit (199 aa).

The protein belongs to the LeuD family. LeuD type 1 subfamily. As to quaternary structure, heterodimer of LeuC and LeuD.

The enzyme catalyses (2R,3S)-3-isopropylmalate = (2S)-2-isopropylmalate. It participates in amino-acid biosynthesis; L-leucine biosynthesis; L-leucine from 3-methyl-2-oxobutanoate: step 2/4. In terms of biological role, catalyzes the isomerization between 2-isopropylmalate and 3-isopropylmalate, via the formation of 2-isopropylmaleate. In Bacillus licheniformis (strain ATCC 14580 / DSM 13 / JCM 2505 / CCUG 7422 / NBRC 12200 / NCIMB 9375 / NCTC 10341 / NRRL NRS-1264 / Gibson 46), this protein is 3-isopropylmalate dehydratase small subunit.